A 1066-amino-acid chain; its full sequence is DNA-directed RNA polymerase subunit beta (1066 aa).

This sequence belongs to the RNA polymerase beta chain family. As to quaternary structure, in plastids the minimal PEP RNA polymerase catalytic core is composed of four subunits: alpha, beta, beta', and beta''. When a (nuclear-encoded) sigma factor is associated with the core the holoenzyme is formed, which can initiate transcription.

It localises to the plastid. The protein localises to the chloroplast. The enzyme catalyses RNA(n) + a ribonucleoside 5'-triphosphate = RNA(n+1) + diphosphate. In terms of biological role, DNA-dependent RNA polymerase catalyzes the transcription of DNA into RNA using the four ribonucleoside triphosphates as substrates. The chain is DNA-directed RNA polymerase subunit beta from Psilotum nudum (Whisk fern).